The sequence spans 189 residues: Matrix protein (189 aa).

It belongs to the novirhabdovirus matrix protein family. As to quaternary structure, homomultimer. Interacts with nucleoprotein and with the cytoplasmic domain of glycoprotein.

The protein localises to the virion membrane. It localises to the host endomembrane system. Its function is as follows. Plays a major role in assembly and budding of virion. Completely covers the ribonucleoprotein coil and keep it in condensed bullet-shaped form. Inhibits viral transcription and stimulates replication. The sequence is that of Matrix protein (M) from Gobiosoma bosc (Naked goby).